Consider the following 209-residue polypeptide: Small ribosomal subunit protein uS4 (209 aa).

The S4 RNA-binding domain maps to 99–162 (RRLDNVVYRL…RESNKFQEMK (64 aa)).

Belongs to the universal ribosomal protein uS4 family. As to quaternary structure, part of the 30S ribosomal subunit. Contacts protein S5. The interaction surface between S4 and S5 is involved in control of translational fidelity.

Its function is as follows. One of the primary rRNA binding proteins, it binds directly to 16S rRNA where it nucleates assembly of the body of the 30S subunit. In terms of biological role, with S5 and S12 plays an important role in translational accuracy. The chain is Small ribosomal subunit protein uS4 from Syntrophomonas wolfei subsp. wolfei (strain DSM 2245B / Goettingen).